The following is a 337-amino-acid chain: tRNA N6-adenosine threonylcarbamoyltransferase (337 aa).

Fe cation is bound by residues H111 and H115. Substrate-binding positions include 134-138 (LVSGG), D167, G180, and N272. A Fe cation-binding site is contributed by D300.

The protein belongs to the KAE1 / TsaD family. Requires Fe(2+) as cofactor.

The protein resides in the cytoplasm. It catalyses the reaction L-threonylcarbamoyladenylate + adenosine(37) in tRNA = N(6)-L-threonylcarbamoyladenosine(37) in tRNA + AMP + H(+). Its function is as follows. Required for the formation of a threonylcarbamoyl group on adenosine at position 37 (t(6)A37) in tRNAs that read codons beginning with adenine. Is involved in the transfer of the threonylcarbamoyl moiety of threonylcarbamoyl-AMP (TC-AMP) to the N6 group of A37, together with TsaE and TsaB. TsaD likely plays a direct catalytic role in this reaction. The sequence is that of tRNA N6-adenosine threonylcarbamoyltransferase from Nitrosomonas europaea (strain ATCC 19718 / CIP 103999 / KCTC 2705 / NBRC 14298).